We begin with the raw amino-acid sequence, 426 residues long: UDP-N-acetylglucosamine 1-carboxyvinyltransferase (426 aa).

24 to 25 (KN) contributes to the phosphoenolpyruvate binding site. Position 95 (R95) interacts with UDP-N-acetyl-alpha-D-glucosamine. Residue C119 is the Proton donor of the active site. C119 carries the post-translational modification 2-(S-cysteinyl)pyruvic acid O-phosphothioketal. UDP-N-acetyl-alpha-D-glucosamine-binding positions include 124-128 (RPVDQ), D308, and V330.

This sequence belongs to the EPSP synthase family. MurA subfamily.

The protein resides in the cytoplasm. The catalysed reaction is phosphoenolpyruvate + UDP-N-acetyl-alpha-D-glucosamine = UDP-N-acetyl-3-O-(1-carboxyvinyl)-alpha-D-glucosamine + phosphate. Its pathway is cell wall biogenesis; peptidoglycan biosynthesis. Cell wall formation. Adds enolpyruvyl to UDP-N-acetylglucosamine. The sequence is that of UDP-N-acetylglucosamine 1-carboxyvinyltransferase from Deinococcus radiodurans (strain ATCC 13939 / DSM 20539 / JCM 16871 / CCUG 27074 / LMG 4051 / NBRC 15346 / NCIMB 9279 / VKM B-1422 / R1).